A 418-amino-acid polypeptide reads, in one-letter code: MDIYDCILEKAKNANRAARTLSNMSTDIKNAALIKMAEELNKNKDDILKANMLDLEDAKSSGKNDAFIDRLTLNENRIESMASGLMKVASLPDPIGEVTRMWKKSNELNIGRVRVPLGTIGIIYEARPNVTVDAAALCVKSGNSVILKGGKEAINSNLAIYNAINKGAIEAGLPAGTIEFINMTERKAVEVLMKLNEYVDVLIPRGGSGLIKSVVENSTVPVIETGIGNCHVYVDSSADLTMAENIVINAKTQRPGVCNAMETLLVHEAVAEKLIPHLTETLSKMGVEIRGCLKTKRLIPDIRLATAEDYAQEFLDLILAVKVVSSLDEALDHIYKYGTKHSEAIITNDYTSSQRFLREVDAAAVYVNASTRFTDGEEFGFGAEIGISTQKLHARGPMGLNELTTIKYIVYGEGQIRE.

It belongs to the gamma-glutamyl phosphate reductase family.

The protein resides in the cytoplasm. The catalysed reaction is L-glutamate 5-semialdehyde + phosphate + NADP(+) = L-glutamyl 5-phosphate + NADPH + H(+). The protein operates within amino-acid biosynthesis; L-proline biosynthesis; L-glutamate 5-semialdehyde from L-glutamate: step 2/2. Its function is as follows. Catalyzes the NADPH-dependent reduction of L-glutamate 5-phosphate into L-glutamate 5-semialdehyde and phosphate. The product spontaneously undergoes cyclization to form 1-pyrroline-5-carboxylate. This is Gamma-glutamyl phosphate reductase from Clostridium kluyveri (strain NBRC 12016).